Here is a 409-residue protein sequence, read N- to C-terminus: Na(+)/H(+) antiporter NhaA 2 (409 aa).

12 helical membrane passes run 10–30, 60–80, 89–109, 118–138, 148–168, 171–191, 203–223, 224–244, 257–277, 283–303, 328–348, and 356–376; these read VAAG…NTPA, GLLV…FLAG, LVPA…YLAI, GWPV…AVFG, FLLA…AVFF, GLDL…AVVG, IAVV…TLSS, GIHA…LSGL, IVLP…IGLA, FWGI…AGGL, LLGG…FAGL, and TLAV…TLSI. The tract at residues 384-409 is disordered; that stretch reads AGAAADDDDATRDDFPAHADGGPARA.

It belongs to the NhaA Na(+)/H(+) (TC 2.A.33) antiporter family.

It localises to the cell membrane. It carries out the reaction Na(+)(in) + 2 H(+)(out) = Na(+)(out) + 2 H(+)(in). Its function is as follows. Na(+)/H(+) antiporter that extrudes sodium in exchange for external protons. The polypeptide is Na(+)/H(+) antiporter NhaA 2 (Clavibacter michiganensis subsp. michiganensis (strain NCPPB 382)).